A 424-amino-acid chain; its full sequence is UDP-N-acetylglucosamine 1-carboxyvinyltransferase (424 aa).

A phosphoenolpyruvate-binding site is contributed by 22 to 23 (KN). Arg-98 contributes to the UDP-N-acetyl-alpha-D-glucosamine binding site. Cys-122 acts as the Proton donor in catalysis. Cys-122 carries the 2-(S-cysteinyl)pyruvic acid O-phosphothioketal modification. Residues 127–131 (RPVDQ), Asp-312, and Ile-334 contribute to the UDP-N-acetyl-alpha-D-glucosamine site.

Belongs to the EPSP synthase family. MurA subfamily.

The protein resides in the cytoplasm. The enzyme catalyses phosphoenolpyruvate + UDP-N-acetyl-alpha-D-glucosamine = UDP-N-acetyl-3-O-(1-carboxyvinyl)-alpha-D-glucosamine + phosphate. The protein operates within cell wall biogenesis; peptidoglycan biosynthesis. In terms of biological role, cell wall formation. Adds enolpyruvyl to UDP-N-acetylglucosamine. The polypeptide is UDP-N-acetylglucosamine 1-carboxyvinyltransferase (Xanthomonas euvesicatoria pv. vesicatoria (strain 85-10) (Xanthomonas campestris pv. vesicatoria)).